The primary structure comprises 1024 residues: Multidrug resistance protein MdtC (1024 aa).

12 helical membrane-spanning segments follow: residues 3 to 23 (FLSLFIYRPVATSLLTLALVL), 333 to 353 (EVEQSLAVSVGLVVLVVFAFL), 360 to 380 (LIPAVAVPVSLIGTFAAMYLC), 387 to 407 (LSLMALTVASGFVVDDAIVVL), 431 to 451 (VGFTVVSMSVSLIAVFIPLLM), 463 to 483 (FAITLSVSIAISLVISLTLTP), 528 to 548 (WALLVFVASLGLTVYLFISMP), 853 to 873 (LWLILAAIATVYIVLGMLYES), 875 to 895 (VHPLTILSTLPSAGMGALLAL), 897 to 917 (LFNTPFSLIALIGILLLIGIV), 953 to 973 (PIIMTTLAAMLGALPLVLSSG), and 984 to 1004 (ITIVGGLVVSQLLTLFTTPVV).

This sequence belongs to the resistance-nodulation-cell division (RND) (TC 2.A.6) family. MdtC subfamily. As to quaternary structure, part of a tripartite efflux system composed of MdtA, MdtB and MdtC. MdtC forms a heteromultimer with MdtB.

The protein resides in the cell inner membrane. The polypeptide is Multidrug resistance protein MdtC (Erwinia amylovora (strain ATCC 49946 / CCPPB 0273 / Ea273 / 27-3)).